We begin with the raw amino-acid sequence, 228 residues long: MIPSKNIQKIKLVTFDAFGTILHLSKPVPIVYSEVAQKYGVHATIDEIEHNSNKAFKDFSEKHKNHGKKSGLNPHDWWIKVIEHSFPTPVPAEMAEELWSYFSKKTGYTIHPLLIDFLKRNKEERKYIIGIISNTDERIRTVLEDYGIDHLIDIYAFSYDVGFEKPSREIFDYAMEKAVKLLGQEIQPEECMHLGDDLIKDVSAARNIQWNAEYCDIKTNFLKYFEQK.

This sequence belongs to the HAD-like hydrolase superfamily.

It localises to the cytoplasm. Its subcellular location is the nucleus. This is an uncharacterized protein from Schizosaccharomyces pombe (strain 972 / ATCC 24843) (Fission yeast).